The primary structure comprises 218 residues: Methylthioribulose-1-phosphate dehydratase (218 aa).

Zn(2+) is bound by residues histidine 107 and histidine 109.

Belongs to the aldolase class II family. MtnB subfamily. It depends on Zn(2+) as a cofactor.

The enzyme catalyses 5-(methylsulfanyl)-D-ribulose 1-phosphate = 5-methylsulfanyl-2,3-dioxopentyl phosphate + H2O. The protein operates within amino-acid biosynthesis; L-methionine biosynthesis via salvage pathway; L-methionine from S-methyl-5-thio-alpha-D-ribose 1-phosphate: step 2/6. Its function is as follows. Catalyzes the dehydration of methylthioribulose-1-phosphate (MTRu-1-P) into 2,3-diketo-5-methylthiopentyl-1-phosphate (DK-MTP-1-P). The protein is Methylthioribulose-1-phosphate dehydratase of Xylella fastidiosa (strain Temecula1 / ATCC 700964).